We begin with the raw amino-acid sequence, 357 residues long: Cell division control protein 10 (357 aa).

The 273-residue stretch at 34–306 folds into the Septin-type G domain; sequence RGFQFNIMVV…ETFRSKQLIA (273 aa). Residues 44–51 are G1 motif; sequence GRSGLGKS. Residues 44–51, T78, G104, 184–192, G240, and R255 contribute to the GTP site; these read GRSGLGKS and KSDSLTLDE. The G3 motif stretch occupies residues 101 to 104; the sequence is DTPG. A G4 motif region spans residues 183–186; it reads AKSD. The tract at residues 310 to 357 is disordered; sequence NASNPNRQSQLQKDQGQTSQQSNQDLKNTSGVPNAPMFQSTTGTAAAR.

It belongs to the TRAFAC class TrmE-Era-EngA-EngB-Septin-like GTPase superfamily. Septin GTPase family.

The protein resides in the bud neck. Plays a role in the cell cycle. Involved in the formation of the ring of filaments in the neck region at the mother-bud junction during mitosis. The protein is Cell division control protein 10 (CDC10) of Candida albicans (strain SC5314 / ATCC MYA-2876) (Yeast).